A 219-amino-acid chain; its full sequence is Thymidylate kinase (219 aa).

7–14 is a binding site for ATP; it reads GIDGAGKS.

Belongs to the thymidylate kinase family.

It carries out the reaction dTMP + ATP = dTDP + ADP. Functionally, phosphorylation of dTMP to form dTDP in both de novo and salvage pathways of dTTP synthesis. This chain is Thymidylate kinase, found in Chlorobium limicola (strain DSM 245 / NBRC 103803 / 6330).